Consider the following 410-residue polypeptide: D-amino acid dehydrogenase (410 aa).

An FAD-binding site is contributed by 9–14 (GGGIVG).

It belongs to the DadA oxidoreductase family. The cofactor is FAD.

It localises to the cell inner membrane. It carries out the reaction a D-alpha-amino acid + a quinone + H2O = a 2-oxocarboxylate + a quinol + NH4(+). With respect to regulation, activity is markedly inhibited by benzoate, and moderately by SH reagents such as p-hydroxymercuribenzoate, iodoacetamide, and iodoacetate. Catalyzes the oxidative deamination of D-amino acids. Has broad substrate specificity; is mostly active on D-proline, and to a lesser extent, on several other D-amino acids such as D-alanine, D-phenylalanine and D-serine. Mediates electron transport from D-proline to coenzyme Q1 in vitro, and is involved in the electron transport chain from D-proline to the c-type cytochrome in vivo. The protein is D-amino acid dehydrogenase of Helicobacter pylori (Campylobacter pylori).